Here is a 115-residue protein sequence, read N- to C-terminus: Vespryn (115 aa).

Positions 1–15 (MTWLLLCLLAQYENG) are cleaved as a signal peptide. The B30.2/SPRY domain occupies 22–115 (SSSAKPYKTS…VKRKDHLRLT (94 aa)).

This sequence belongs to the ohanin/vespryn family. Expressed by the venom gland.

Its subcellular location is the secreted. Its function is as follows. Neurotoxin that produces dose-dependent hypolocomotion and hyperalgesia in mice. May directly act on the central nervous system, as it is 6500-fold more potent when administered intracerebroventricularly than intraperitoneal. The sequence is that of Vespryn from Pogona barbata (Bearded dragon).